The primary structure comprises 125 residues: Large ribosomal subunit protein bL12 (125 aa).

Belongs to the bacterial ribosomal protein bL12 family. In terms of assembly, homodimer. Part of the ribosomal stalk of the 50S ribosomal subunit. Forms a multimeric L10(L12)X complex, where L10 forms an elongated spine to which 2 to 4 L12 dimers bind in a sequential fashion. Binds GTP-bound translation factors.

Forms part of the ribosomal stalk which helps the ribosome interact with GTP-bound translation factors. Is thus essential for accurate translation. This chain is Large ribosomal subunit protein bL12, found in Nitrobacter winogradskyi (strain ATCC 25391 / DSM 10237 / CIP 104748 / NCIMB 11846 / Nb-255).